Reading from the N-terminus, the 162-residue chain is Cyanate hydratase (162 aa).

Residues R102, E105, and S128 contribute to the active site.

Belongs to the cyanase family.

The enzyme catalyses cyanate + hydrogencarbonate + 3 H(+) = NH4(+) + 2 CO2. Its function is as follows. Catalyzes the reaction of cyanate with bicarbonate to produce ammonia and carbon dioxide. This Mycosarcoma maydis (Corn smut fungus) protein is Cyanate hydratase.